The chain runs to 305 residues: Tyrosine recombinase XerC (305 aa).

Positions Thr-4 to Glu-95 constitute a Core-binding (CB) domain. The region spanning Leu-116–Val-298 is the Tyr recombinase domain. Active-site residues include Arg-159, Lys-182, His-250, Arg-253, and His-276. Tyr-285 acts as the O-(3'-phospho-DNA)-tyrosine intermediate in catalysis.

It belongs to the 'phage' integrase family. XerC subfamily. In terms of assembly, forms a cyclic heterotetrameric complex composed of two molecules of XerC and two molecules of XerD.

It is found in the cytoplasm. Site-specific tyrosine recombinase, which acts by catalyzing the cutting and rejoining of the recombining DNA molecules. The XerC-XerD complex is essential to convert dimers of the bacterial chromosome into monomers to permit their segregation at cell division. It also contributes to the segregational stability of plasmids. The polypeptide is Tyrosine recombinase XerC (Rickettsia bellii (strain OSU 85-389)).